Here is a 171-residue protein sequence, read N- to C-terminus: Transcription antitermination protein NusB (171 aa).

This sequence belongs to the NusB family.

Its function is as follows. Involved in transcription antitermination. Required for transcription of ribosomal RNA (rRNA) genes. Binds specifically to the boxA antiterminator sequence of the ribosomal RNA (rrn) operons. In Brucella suis (strain ATCC 23445 / NCTC 10510), this protein is Transcription antitermination protein NusB.